Here is a 167-residue protein sequence, read N- to C-terminus: Aphrodisin (167 aa).

The N-terminal stretch at 1–16 is a signal peptide; the sequence is MVKILLLALVFSLAHA. Glutamine 17 is subject to Pyrrolidone carboxylic acid. Cystine bridges form between cysteine 54/cysteine 58 and cysteine 73/cysteine 165. Asparagine 57 and asparagine 85 each carry an N-linked (GlcNAc...) asparagine glycan.

The protein belongs to the calycin superfamily. Lipocalin family. As to expression, expressed in the vagina, uterus, and Bartholin's glands of female hamsters. Secreted in vaginal discharge.

The protein localises to the secreted. Functionally, acts as an aphrodisiac pheromone, reliably eliciting copulatory behavior from male hamster. The protein is Aphrodisin of Cricetus cricetus (Black-bellied hamster).